Consider the following 619-residue polypeptide: DNA mismatch repair protein MutL (619 aa).

This sequence belongs to the DNA mismatch repair MutL/HexB family.

Its function is as follows. This protein is involved in the repair of mismatches in DNA. It is required for dam-dependent methyl-directed DNA mismatch repair. May act as a 'molecular matchmaker', a protein that promotes the formation of a stable complex between two or more DNA-binding proteins in an ATP-dependent manner without itself being part of a final effector complex. The protein is DNA mismatch repair protein MutL of Xylella fastidiosa (strain M23).